A 126-amino-acid chain; its full sequence is UPF0212 protein TON_0350 (126 aa).

This sequence belongs to the UPF0212 family.

The protein is UPF0212 protein TON_0350 of Thermococcus onnurineus (strain NA1).